Here is a 410-residue protein sequence, read N- to C-terminus: Chorismate synthase (410 aa).

Residues arginine 40 and arginine 46 each contribute to the NADP(+) site. Residues 129-131 (RSS), 257-258 (QA), glycine 302, 317-321 (KPISS), and arginine 343 contribute to the FMN site.

Belongs to the chorismate synthase family. As to quaternary structure, homotetramer. Requires FMNH2 as cofactor.

It carries out the reaction 5-O-(1-carboxyvinyl)-3-phosphoshikimate = chorismate + phosphate. It participates in metabolic intermediate biosynthesis; chorismate biosynthesis; chorismate from D-erythrose 4-phosphate and phosphoenolpyruvate: step 7/7. Its function is as follows. Catalyzes the anti-1,4-elimination of the C-3 phosphate and the C-6 proR hydrogen from 5-enolpyruvylshikimate-3-phosphate (EPSP) to yield chorismate, which is the branch point compound that serves as the starting substrate for the three terminal pathways of aromatic amino acid biosynthesis. This reaction introduces a second double bond into the aromatic ring system. The polypeptide is Chorismate synthase (Chlorobaculum parvum (strain DSM 263 / NCIMB 8327) (Chlorobium vibrioforme subsp. thiosulfatophilum)).